The sequence spans 642 residues: Uromodulin (642 aa).

The first 24 residues, M1–S24, serve as a signal peptide directing secretion. N-linked (GlcNAc...) asparagine glycans are attached at residues N25 and N38. Residues E28 to E64 form the EGF-like 1 domain. Disulfide bonds link C32/C41, C35/C50, C52/C63, C69/C82, C77/C91, C93/C105, C111/C125, C119/C134, C136/C147, C149/C160, C154/C171, C175/C268, C196/C283, C218/C256, C224/C288, C249/C257, C298/C307, C301/C316, C318/C348, C336/C426, and C367/C390. One can recognise an EGF-like 2; calcium-binding domain in the interval D65–T106. Residues N76 and N79 are each glycosylated (N-linked (GlcNAc...) asparagine). One can recognise an EGF-like 3; calcium-binding domain in the interval D107–E148. Residues C149–Q172 form a beta hairpin region. Positions D173–S292 are D10C. N233 carries N-linked (GlcNAc...) asparagine glycosylation. The N-linked (GlcNAc...) asparagine glycan is linked to N276. The EGF-like 4 domain maps to S293–I324. N323 carries an N-linked (GlcNAc...) asparagine glycan. A ZP-N region spans residues E335 to L430. Residues E335 to S590 form the ZP domain. N397 and N448 each carry an N-linked (GlcNAc...) asparagine glycan. The tract at residues D431 to T454 is flexible ZP-N/ZP-C linker; important for secretion and polymerization into filaments. Residues G455–Q465 are internal hydrophobic patch (IHP). Residues G455–S590 are ZP-C. Intrachain disulfides connect C507-C567, C528-C583, and C572-C579. N514 carries an N-linked (GlcNAc...) asparagine glycan. The segment at R587 to S590 is essential for cleavage by HPN. Residues V599–R607 form an external hydrophobic patch (EHP); regulates polymerization into filaments region. A618 is lipidated: GPI-anchor amidated alanine. Positions S619–Q642 are cleaved as a propeptide — removed in mature form.

As to quaternary structure, homodimer that then polymerizes into long filaments. The filaments can additionally assemble laterally to form a sheet. The filaments consist of a zigzag-shaped backbone with laterally protruding arms which interact with bacterial adhesin fimH. Two fimH molecules can bind to a single UMOD monomer. N-glycosylated. Post-translationally, proteolytically cleaved at a conserved C-terminal proteolytic cleavage site to generate the secreted form found in urine. This cleavage is catalyzed by HPN. Detected in urine (secreted form). Detected in kidney thick ascending limb epithelial cells (at protein level).

The protein resides in the secreted. The protein localises to the apical cell membrane. It localises to the basolateral cell membrane. It is found in the cell projection. Its subcellular location is the cilium membrane. In terms of biological role, functions in biogenesis and organization of the apical membrane of epithelial cells of the thick ascending limb of Henle's loop (TALH), where it promotes formation of complex filamentous gel-like structure that may play a role in the water barrier permeability. May serve as a receptor for binding and endocytosis of cytokines (IL-1, IL-2) and TNF. Facilitates neutrophil migration across renal epithelia. Its function is as follows. In the urine, may contribute to colloid osmotic pressure, retards passage of positively charged electrolytes and inhibits formation of liquid containing supersaturated salts and subsequent formation of salt crystals. Protects against urinary tract infections by binding to type 1 fimbriated E.coli. Binds to the bacterial adhesin fimH which mediates the stable formation of bacterial aggregates, prevents the binding of E.coli to uroplakins UPK1A and UPK1B which act as urothelial receptors for type I fimbriae, and allows for pathogen clearance through micturation. Also promotes aggregation of other bacteria including K.pneumoniae, P.aeruginosa and S.mitis and so may also protect against other uropathogens. This is Uromodulin (Umod) from Mus musculus (Mouse).